The sequence spans 393 residues: NAD(P)H-quinone oxidoreductase subunit H, chloroplastic (393 aa).

This sequence belongs to the complex I 49 kDa subunit family. As to quaternary structure, NDH is composed of at least 16 different subunits, 5 of which are encoded in the nucleus.

Its subcellular location is the plastid. It localises to the chloroplast thylakoid membrane. It carries out the reaction a plastoquinone + NADH + (n+1) H(+)(in) = a plastoquinol + NAD(+) + n H(+)(out). The enzyme catalyses a plastoquinone + NADPH + (n+1) H(+)(in) = a plastoquinol + NADP(+) + n H(+)(out). In terms of biological role, NDH shuttles electrons from NAD(P)H:plastoquinone, via FMN and iron-sulfur (Fe-S) centers, to quinones in the photosynthetic chain and possibly in a chloroplast respiratory chain. The immediate electron acceptor for the enzyme in this species is believed to be plastoquinone. Couples the redox reaction to proton translocation, and thus conserves the redox energy in a proton gradient. The protein is NAD(P)H-quinone oxidoreductase subunit H, chloroplastic of Solanum bulbocastanum (Wild potato).